The primary structure comprises 713 residues: Polyribonucleotide nucleotidyltransferase (713 aa).

Asp495 and Asp501 together coordinate Mg(2+). Residues Pro562 to Ile621 enclose the KH domain. In terms of domain architecture, S1 motif spans Asp631 to Arg700.

The protein belongs to the polyribonucleotide nucleotidyltransferase family. Requires Mg(2+) as cofactor.

The protein localises to the cytoplasm. It catalyses the reaction RNA(n+1) + phosphate = RNA(n) + a ribonucleoside 5'-diphosphate. Involved in mRNA degradation. Catalyzes the phosphorolysis of single-stranded polyribonucleotides processively in the 3'- to 5'-direction. This chain is Polyribonucleotide nucleotidyltransferase, found in Gloeobacter violaceus (strain ATCC 29082 / PCC 7421).